Consider the following 259-residue polypeptide: Dihydroorotate dehydrogenase B (NAD(+)), electron transfer subunit (259 aa).

The FAD-binding FR-type domain maps to 2 to 102; that stretch reads MQKQNMIVVN…LGPLGHGFPV (101 aa). FAD is bound by residues 53 to 56, 70 to 72, and 77 to 78; these read RPIS, LYR, and GT. Residues C221, C226, C229, and C246 each coordinate [2Fe-2S] cluster.

It belongs to the PyrK family. As to quaternary structure, heterotetramer of 2 PyrK and 2 PyrD type B subunits. The cofactor is [2Fe-2S] cluster. FAD serves as cofactor.

It participates in pyrimidine metabolism; UMP biosynthesis via de novo pathway; orotate from (S)-dihydroorotate (NAD(+) route): step 1/1. In terms of biological role, responsible for channeling the electrons from the oxidation of dihydroorotate from the FMN redox center in the PyrD type B subunit to the ultimate electron acceptor NAD(+). The sequence is that of Dihydroorotate dehydrogenase B (NAD(+)), electron transfer subunit from Bacillus cereus (strain G9842).